A 344-amino-acid chain; its full sequence is Dihydroorotase (344 aa).

Positions 13 and 15 each coordinate Zn(2+). Residues 15–17 and Asn41 each bind substrate; that span reads HLR. Residues Lys99, His136, and His174 each coordinate Zn(2+). Lys99 is modified (N6-carboxylysine). His136 serves as a coordination point for substrate. Substrate is bound at residue Leu219. Position 247 (Asp247) interacts with Zn(2+). Residue Asp247 is part of the active site. Positions 251 and 263 each coordinate substrate.

This sequence belongs to the metallo-dependent hydrolases superfamily. DHOase family. Class II DHOase subfamily. Homodimer. Zn(2+) serves as cofactor.

The catalysed reaction is (S)-dihydroorotate + H2O = N-carbamoyl-L-aspartate + H(+). Its pathway is pyrimidine metabolism; UMP biosynthesis via de novo pathway; (S)-dihydroorotate from bicarbonate: step 3/3. Catalyzes the reversible cyclization of carbamoyl aspartate to dihydroorotate. The protein is Dihydroorotase of Idiomarina loihiensis (strain ATCC BAA-735 / DSM 15497 / L2-TR).